The chain runs to 525 residues: Apolipoprotein N-acyltransferase 2 (525 aa).

6 helical membrane-spanning segments follow: residues 25–45, 56–76, 81–101, 115–135, 153–173, and 200–220; these read ILNFGSAIAGFSGLVLVYYAL, FLYGFFVSFVHLMSSFWLAFF, IFTLGASTLAYFFIAMPFGFL, FFFAAIWLLWEFAKSTGFLAY, FVDITGVWGLSFIVPLIAACL, and LIFTAFLVLIINIYGITILSI. The CN hydrolase domain maps to 228-486; the sequence is LNTVIVQQNT…AESVYTEVPV (259 aa). Residue E274 is the Proton acceptor of the active site. The active site involves K339. C397 functions as the Nucleophile in the catalytic mechanism. Residues 495–515 traverse the membrane as a helical segment; sequence ASYKDWLPIMMFLILIFNIFL.

The protein belongs to the CN hydrolase family. Apolipoprotein N-acyltransferase subfamily.

It is found in the cell inner membrane. It carries out the reaction N-terminal S-1,2-diacyl-sn-glyceryl-L-cysteinyl-[lipoprotein] + a glycerophospholipid = N-acyl-S-1,2-diacyl-sn-glyceryl-L-cysteinyl-[lipoprotein] + a 2-acyl-sn-glycero-3-phospholipid + H(+). It functions in the pathway protein modification; lipoprotein biosynthesis (N-acyl transfer). Catalyzes the phospholipid dependent N-acylation of the N-terminal cysteine of apolipoprotein, the last step in lipoprotein maturation. The chain is Apolipoprotein N-acyltransferase 2 from Treponema denticola (strain ATCC 35405 / DSM 14222 / CIP 103919 / JCM 8153 / KCTC 15104).